We begin with the raw amino-acid sequence, 275 residues long: NifU-like protein 5, mitochondrial (275 aa).

Residues 1 to 61 constitute a mitochondrion transit peptide; that stretch reads MKGLTRLLNS…TNASRNCSRS (61 aa).

It belongs to the NifU family.

It is found in the mitochondrion. Its function is as follows. Molecular scaffold for [Fe-S] cluster assembly of mitochondrial iron-sulfur proteins. The protein is NifU-like protein 5, mitochondrial (NIFU5) of Arabidopsis thaliana (Mouse-ear cress).